Consider the following 231-residue polypeptide: Cytidylate kinase (231 aa).

16–24 (GPAASGKST) is an ATP binding site. A disordered region spans residues 176-205 (PDLDSLEQEITKRDRDDAEREHAPLKKHPE). Residues 184–205 (EITKRDRDDAEREHAPLKKHPE) are compositionally biased toward basic and acidic residues.

This sequence belongs to the cytidylate kinase family. Type 1 subfamily.

It localises to the cytoplasm. It carries out the reaction CMP + ATP = CDP + ADP. It catalyses the reaction dCMP + ATP = dCDP + ADP. This is Cytidylate kinase from Pelodictyon phaeoclathratiforme (strain DSM 5477 / BU-1).